The chain runs to 191 residues: Ribonuclease HII (191 aa).

Positions 7–191 (ILMAGVDEVG…YSPVADLISK (185 aa)) constitute an RNase H type-2 domain. A divalent metal cation contacts are provided by D13, E14, and D103.

This sequence belongs to the RNase HII family. The cofactor is Mn(2+). It depends on Mg(2+) as a cofactor.

The protein localises to the cytoplasm. It catalyses the reaction Endonucleolytic cleavage to 5'-phosphomonoester.. Its function is as follows. Endonuclease that specifically degrades the RNA of RNA-DNA hybrids. This chain is Ribonuclease HII, found in Legionella pneumophila (strain Corby).